We begin with the raw amino-acid sequence, 145 residues long: UPF0310 protein PH1033 (145 aa).

Belongs to the UPF0310 family.

The polypeptide is UPF0310 protein PH1033 (Pyrococcus horikoshii (strain ATCC 700860 / DSM 12428 / JCM 9974 / NBRC 100139 / OT-3)).